The following is a 175-amino-acid chain: ATP synthase subunit b (175 aa).

The helical transmembrane segment at 22–44 threads the bilayer; it reads MLVQLFFFLILLALLKKFAWGPL.

The protein belongs to the ATPase B chain family. F-type ATPases have 2 components, F(1) - the catalytic core - and F(0) - the membrane proton channel. F(1) has five subunits: alpha(3), beta(3), gamma(1), delta(1), epsilon(1). F(0) has three main subunits: a(1), b(2) and c(10-14). The alpha and beta chains form an alternating ring which encloses part of the gamma chain. F(1) is attached to F(0) by a central stalk formed by the gamma and epsilon chains, while a peripheral stalk is formed by the delta and b chains.

It is found in the cell membrane. Functionally, f(1)F(0) ATP synthase produces ATP from ADP in the presence of a proton or sodium gradient. F-type ATPases consist of two structural domains, F(1) containing the extramembraneous catalytic core and F(0) containing the membrane proton channel, linked together by a central stalk and a peripheral stalk. During catalysis, ATP synthesis in the catalytic domain of F(1) is coupled via a rotary mechanism of the central stalk subunits to proton translocation. In terms of biological role, component of the F(0) channel, it forms part of the peripheral stalk, linking F(1) to F(0). The chain is ATP synthase subunit b from Oceanobacillus iheyensis (strain DSM 14371 / CIP 107618 / JCM 11309 / KCTC 3954 / HTE831).